Here is a 518-residue protein sequence, read N- to C-terminus: Serine/threonine-protein kinase UL13 (518 aa).

2 disordered regions span residues 1-22 (MDESGRQRPASHVAADISPQGA) and 39-120 (SRRA…PSPP). Over residues 44–61 (GRPSGPSPRDGAVSGARP) the composition is skewed to low complexity. The Protein kinase domain maps to 151 to 518 (PGARSFGGSG…ANPAARHSLS (368 aa)). ATP contacts are provided by residues 157–165 (GGSGGYGEV) and Lys176. The Proton acceptor role is filled by Asp277.

It belongs to the protein kinase superfamily. Ser/Thr protein kinase family. In terms of processing, autophosphorylated.

The protein resides in the virion tegument. It is found in the host nucleus. It carries out the reaction L-seryl-[protein] + ATP = O-phospho-L-seryl-[protein] + ADP + H(+). The catalysed reaction is L-threonyl-[protein] + ATP = O-phospho-L-threonyl-[protein] + ADP + H(+). In terms of biological role, multifunctional serine/threonine kinase that plays a role in several processes including egress of virus particles from the nucleus, modulation of the actin cytoskeleton and regulation of viral and cellular gene expression. Regulates the nuclear localization of viral envelopment factors UL34 and UL31, by phosphorylating the US3 kinase, indicating a role in nuclear egress. Disrupts host nuclear lamins, including LMNA and LMNB1. Phosphorylates the viral Fc receptor composed of glycoproteins E (gE) and I (gI). Phosphorylation of glycoprotein E (gE) by UL13 alters its subcellular localization, from the host early endosome to the plasma membrane. Participates in the transcriptional regulation of cellular and viral mRNAs mainly by phosphorylating the viral transcriptional regulator ICP22. Additional substrates have been identified, including UL41, UL49 or host EF1D. The polypeptide is Serine/threonine-protein kinase UL13 (Homo sapiens (Human)).